The sequence spans 201 residues: MPVTHASFPCSVLLLCGGRGQRMGGRDKGLLEWRGRPLIAWLHEQVRPLSDDLILSCNRNHERYAHYADQLVTDEDQDFQGPLAGIRAGMAVAHHEQMLVLPCDAPLVDRQLLEALLAHAGARPVVVRQGDYWQPLFCLLPTALKADLEQLWQAGERSPQRWFSRLAPVAVECPIDDPRLANLNTPEMLAAASLSADARES.

GTP-binding positions include 15–17 (LCG), Lys28, Asp74, and Asp104. Asp104 serves as a coordination point for Mg(2+).

The protein belongs to the MobA family. In terms of assembly, monomer. Mg(2+) serves as cofactor.

It is found in the cytoplasm. The catalysed reaction is Mo-molybdopterin + GTP + H(+) = Mo-molybdopterin guanine dinucleotide + diphosphate. In terms of biological role, transfers a GMP moiety from GTP to Mo-molybdopterin (Mo-MPT) cofactor (Moco or molybdenum cofactor) to form Mo-molybdopterin guanine dinucleotide (Mo-MGD) cofactor. In Ectopseudomonas mendocina (strain ymp) (Pseudomonas mendocina), this protein is Molybdenum cofactor guanylyltransferase.